Here is a 293-residue protein sequence, read N- to C-terminus: Transcription initiation factor IIB 2 (293 aa).

A TFIIB-type zinc finger spans residues Met-1 to Glu-31. Zn(2+) contacts are provided by Cys-3, Cys-6, Cys-23, and Cys-26. 2 repeat units span residues Ser-107–Ile-193 and Glu-204–Asp-285.

Belongs to the TFIIB family.

Stabilizes TBP binding to an archaeal box-A promoter. Also responsible for recruiting RNA polymerase II to the pre-initiation complex (DNA-TBP-TFIIB). In Saccharolobus solfataricus (strain ATCC 35092 / DSM 1617 / JCM 11322 / P2) (Sulfolobus solfataricus), this protein is Transcription initiation factor IIB 2.